We begin with the raw amino-acid sequence, 321 residues long: Glucokinase (321 aa).

8 to 13 contributes to the ATP binding site; that stretch reads GDVGGT.

The protein belongs to the bacterial glucokinase family.

The protein localises to the cytoplasm. It carries out the reaction D-glucose + ATP = D-glucose 6-phosphate + ADP + H(+). This chain is Glucokinase, found in Enterobacter sp. (strain 638).